The chain runs to 815 residues: MRAGGCTVEQALTADAANVVKQAMGLARRRGHAQVTPLHVASTMLSAPTGLLRTACLQSHTHPLQCRALELCFNVALNRLPTSTGSPMLGVPTSPFPSISNALGAAFKRAQAHQRRGSIESQQQPILAVKIEVEQLIISILDDPSVSRVMREAGFSSPQVKTKVEQAVSLEICSKTTSSSKPKEGKLLTPVRNEDVMNVINNLVDKKRRNFVIVGECLATIDGVVKTVMEKVDKKDVPEVLKDVKFITLSFSSFGQPSRADVERKLEELETLVKSCVGKGVILNLGDLNWFVESRTRGSSLYNNNDSYCVVEHMIMEIGKLACGLVMGDHGRFWLMGLATSQTYVRCKSGQPSLESLWCLTTLTIPATSNSLRLSLVSESELEVKKSENVSLQLQQSSDQLSFCEECSVKFESEARFLKSSNSNVTTVALPAWLQQYKKENQNSHTDSDSIKELVVKWNSICDSIHKRPSLKTLTLSSPTSSFSGSTQPSISTLHHLQTNGDWPVIETNTHRHHSVVHETSHLRLFIPEHDSEQKTELVCSNPNSTMNSEASSSDAMELEHASSRFKEMNAENLATLCAALESKVPWQKDLVPELAKTVLKCRSGSSTRKINGNEDKKEDTWMFFQGLDVDAKEKIARELAKLVFGSQDSFVSICLSSFSSTRSDSAEDLRNKRLRDEQSLSYIERFSEAVSLDPNRVILVEDIEQADYLSQVGFKRAVERGRVCNSSGEEASLKDAIVILSCERFRSRSRACSPPSNQKSDGSDQPEDKNVATCVALDLNLSIDSAYVCEEESCDEIGLLEAVDARFHFKCSST.

In terms of domain architecture, Clp R spans 8–171; it reads VEQALTADAA…TKVEQAVSLE (164 aa). Repeat regions lie at residues 12-80 and 99-171; these read LTAD…LNRL and ISNA…VSLE. The tract at residues 750–769 is disordered; the sequence is SRACSPPSNQKSDGSDQPED. The EAR motif lies at 778-782; sequence LDLNL.

Belongs to the ClpA/ClpB family. As to quaternary structure, interacts probably with TPL/TPR in an EAR-motif dependent manner. Expressed in roots and seedlings.

In terms of biological role, may function in a transcriptional corepressor complex. This chain is Protein SMAX1-LIKE 3, found in Arabidopsis thaliana (Mouse-ear cress).